Consider the following 312-residue polypeptide: Small ribosomal subunit protein RACK1 (312 aa).

7 WD repeats span residues G9 to K42, G63 to D93, K105 to N135, G148 to N180, G192 to D222, N233 to D262, and P279 to S307.

This sequence belongs to the WD repeat G protein beta family. Ribosomal protein RACK1 subfamily.

The sequence is that of Small ribosomal subunit protein RACK1 from Leishmania major.